We begin with the raw amino-acid sequence, 612 residues long: Rhamnogalacturonan exolyase YesX (612 aa).

N119 provides a ligand contact to substrate. The Ca(2+) site is built by D120, D125, D127, D129, E131, and E133. Residues D139, E154, and R174 each coordinate substrate. 5 residues coordinate Ca(2+): D189, D191, D193, K195, and E197. Positions 205 and 222 each coordinate substrate. Ca(2+)-binding residues include H330, D336, D338, D340, K342, E344, D353, H354, H366, D368, D374, D376, R379, G381, E383, and E389. R419 is a substrate binding site. The Ca(2+) site is built by D472, D474, V476, and E478. N516 to T518 is a substrate binding site. N527, F529, D531, R533, E535, N576, and A578 together coordinate Ca(2+). Y579 lines the substrate pocket. N580 provides a ligand contact to Ca(2+).

This sequence belongs to the polysaccharide lyase 11 family. In terms of assembly, monomer. Mn(2+) serves as cofactor. Zn(2+) is required as a cofactor. The cofactor is Co(2+). It depends on Ca(2+) as a cofactor.

Its subcellular location is the secreted. It catalyses the reaction Exotype eliminative cleavage of alpha-L-rhamnopyranosyl-(1-&gt;4)-alpha-D-galactopyranosyluronic acid bonds of rhamnogalacturonan I oligosaccharides containing alpha-L-rhamnopyranose at the reducing end and 4-deoxy-4,5-unsaturated D-galactopyranosyluronic acid at the non-reducing end. The products are the disaccharide 2-O-(4-deoxy-beta-L-threo-hex-4-enopyranuronosyl)-alpha-L-rhamnopyranose and the shortened rhamnogalacturonan oligosaccharide containing one 4-deoxy-4,5-unsaturated D-galactopyranosyluronic acid at the non-reducing end.. Functionally, pectinolytic enzyme that degrades type I rhamnogalacturonan from plant cell walls and releases disaccharide products. Degrades rhamnogalacturonan, polygalacturonic acid and pectic acid. Has very low activity on pectin. This is Rhamnogalacturonan exolyase YesX (yesX) from Bacillus subtilis (strain 168).